Consider the following 879-residue polypeptide: Alanine--tRNA ligase (879 aa).

4 residues coordinate Zn(2+): histidine 566, histidine 570, cysteine 668, and histidine 672.

Belongs to the class-II aminoacyl-tRNA synthetase family. Zn(2+) serves as cofactor.

Its subcellular location is the cytoplasm. The catalysed reaction is tRNA(Ala) + L-alanine + ATP = L-alanyl-tRNA(Ala) + AMP + diphosphate. Functionally, catalyzes the attachment of alanine to tRNA(Ala) in a two-step reaction: alanine is first activated by ATP to form Ala-AMP and then transferred to the acceptor end of tRNA(Ala). Also edits incorrectly charged Ser-tRNA(Ala) and Gly-tRNA(Ala) via its editing domain. The protein is Alanine--tRNA ligase of Listeria innocua serovar 6a (strain ATCC BAA-680 / CLIP 11262).